We begin with the raw amino-acid sequence, 111 residues long: Phosphoribosyl-ATP pyrophosphatase (111 aa).

Belongs to the PRA-PH family.

The protein localises to the cytoplasm. It carries out the reaction 1-(5-phospho-beta-D-ribosyl)-ATP + H2O = 1-(5-phospho-beta-D-ribosyl)-5'-AMP + diphosphate + H(+). It functions in the pathway amino-acid biosynthesis; L-histidine biosynthesis; L-histidine from 5-phospho-alpha-D-ribose 1-diphosphate: step 2/9. In Pseudomonas aeruginosa (strain ATCC 15692 / DSM 22644 / CIP 104116 / JCM 14847 / LMG 12228 / 1C / PRS 101 / PAO1), this protein is Phosphoribosyl-ATP pyrophosphatase (hisE).